We begin with the raw amino-acid sequence, 80 residues long: Acyl carrier protein (80 aa).

The region spanning 2-77 is the Carrier domain; that stretch reads SDIEQRVKKI…QAIDYAKAHV (76 aa). Serine 37 bears the O-(pantetheine 4'-phosphoryl)serine mark.

This sequence belongs to the acyl carrier protein (ACP) family. In terms of processing, 4'-phosphopantetheine is transferred from CoA to a specific serine of apo-ACP by AcpS. This modification is essential for activity because fatty acids are bound in thioester linkage to the sulfhydryl of the prosthetic group.

It is found in the cytoplasm. The protein operates within lipid metabolism; fatty acid biosynthesis. Functionally, carrier of the growing fatty acid chain in fatty acid biosynthesis. In Herminiimonas arsenicoxydans, this protein is Acyl carrier protein.